A 352-amino-acid chain; its full sequence is Ion-translocating oxidoreductase complex subunit D (352 aa).

A run of 5 helical transmembrane segments spans residues 20–40 (IMLL…WFFG), 42–62 (GTLV…ALVL), 78–109 (ALLT…VIIA), 123–143 (PAMI…TSWL), and 148–168 (IAVN…GHIT). At Thr187 the chain carries FMN phosphoryl threonine. A run of 5 helical transmembrane segments spans residues 215-235 (LAGV…VWLL), 242-262 (WHIP…GWLF), 267-287 (LAAP…FFIL), 301-321 (LIFG…GGYP), and 322-342 (DGVA…DYYT).

The protein belongs to the NqrB/RnfD family. As to quaternary structure, the complex is composed of six subunits: RsxA, RsxB, RsxC, RsxD, RsxE and RsxG. FMN serves as cofactor.

The protein resides in the cell inner membrane. Functionally, part of a membrane-bound complex that couples electron transfer with translocation of ions across the membrane. Required to maintain the reduced state of SoxR. The polypeptide is Ion-translocating oxidoreductase complex subunit D (Escherichia coli (strain SMS-3-5 / SECEC)).